The following is a 338-amino-acid chain: Nicotinate-nucleotide--dimethylbenzimidazole phosphoribosyltransferase (338 aa).

The active-site Proton acceptor is the glutamate 305.

The protein belongs to the CobT family.

It catalyses the reaction 5,6-dimethylbenzimidazole + nicotinate beta-D-ribonucleotide = alpha-ribazole 5'-phosphate + nicotinate + H(+). It functions in the pathway nucleoside biosynthesis; alpha-ribazole biosynthesis; alpha-ribazole from 5,6-dimethylbenzimidazole: step 1/2. Its function is as follows. Catalyzes the synthesis of alpha-ribazole-5'-phosphate from nicotinate mononucleotide (NAMN) and 5,6-dimethylbenzimidazole (DMB). The protein is Nicotinate-nucleotide--dimethylbenzimidazole phosphoribosyltransferase of Rhizobium leguminosarum bv. trifolii (strain WSM2304).